Consider the following 193-residue polypeptide: dTTP/UTP pyrophosphatase (193 aa).

The active-site Proton acceptor is the aspartate 71.

It belongs to the Maf family. YhdE subfamily. A divalent metal cation is required as a cofactor.

Its subcellular location is the cytoplasm. The enzyme catalyses dTTP + H2O = dTMP + diphosphate + H(+). The catalysed reaction is UTP + H2O = UMP + diphosphate + H(+). In terms of biological role, nucleoside triphosphate pyrophosphatase that hydrolyzes dTTP and UTP. May have a dual role in cell division arrest and in preventing the incorporation of modified nucleotides into cellular nucleic acids. The polypeptide is dTTP/UTP pyrophosphatase (Geobacter sp. (strain M21)).